The primary structure comprises 338 residues: 3-isopropylmalate dehydrogenase (338 aa).

Substrate is bound by residues arginine 88, arginine 98, arginine 122, and aspartate 212. Mg(2+)-binding residues include aspartate 212, aspartate 236, and aspartate 240. 272–284 (GSAPDIAGQGIAD) serves as a coordination point for NAD(+).

The protein belongs to the isocitrate and isopropylmalate dehydrogenases family. LeuB type 2 subfamily. In terms of assembly, homodimer. Mg(2+) serves as cofactor. The cofactor is Mn(2+).

Its subcellular location is the cytoplasm. The catalysed reaction is (2R,3S)-3-isopropylmalate + NAD(+) = 4-methyl-2-oxopentanoate + CO2 + NADH. The protein operates within amino-acid biosynthesis; L-leucine biosynthesis; L-leucine from 3-methyl-2-oxobutanoate: step 3/4. Functionally, catalyzes the oxidation of 3-carboxy-2-hydroxy-4-methylpentanoate (3-isopropylmalate) to 3-carboxy-4-methyl-2-oxopentanoate. The product decarboxylates to 4-methyl-2 oxopentanoate. This chain is 3-isopropylmalate dehydrogenase, found in Corynebacterium jeikeium (strain K411).